Consider the following 666-residue polypeptide: Endogenous retrovirus group K member 24 Gag polyprotein (666 aa).

Glycine 2 is lipidated: N-myristoyl glycine. Residues 165-264 form a disordered region; sequence GKGPELVGPS…APPSRQGSEL (100 aa). The span at 232–247 shows a compositional bias: pro residues; it reads GMPPAPQGRAPYPQPP. 2 CCHC-type zinc fingers span residues 544 to 561 and 580 to 597; these read GKCY…NCPV and DLCP…QCRS. The interval 598 to 641 is disordered; that stretch reads KFDKNGQPLSGNEQRGQPQAPQQTGAFPIQPFVPQGFQGQQPPL. A compositionally biased stretch (polar residues) spans 604–622; the sequence is QPLSGNEQRGQPQAPQQTG. A compositionally biased stretch (low complexity) spans 624-640; it reads FPIQPFVPQGFQGQQPP.

It belongs to the beta type-B retroviral Gag protein family. HERV class-II K(HML-2) gag subfamily. Myristoylation is essential for retroviral assembly. Alteration of the glycine residue leads to a block in the budding of particles and an accumulation of Gag inside the cell. In terms of processing, specific enzymatic cleavages may yield mature proteins.

The protein localises to the cell membrane. Its function is as follows. The products of the Gag polyproteins of infectious retroviruses perform highly complex orchestrated tasks during the assembly, budding, maturation, and infection stages of the viral replication cycle. During viral assembly, the proteins form membrane associations and self-associations that ultimately result in budding of an immature virion from the infected cell. Gag precursors also function during viral assembly to selectively bind and package two plus strands of genomic RNA. Endogenous Gag proteins may have kept, lost or modified their original function during evolution. This chain is Endogenous retrovirus group K member 24 Gag polyprotein (ERVK-24), found in Homo sapiens (Human).